The primary structure comprises 793 residues: von Willebrand factor A domain-containing protein 5A (793 aa).

One can recognise a VIT domain in the interval 1 to 131; it reads MEHHCGLITS…KVAVTLRYVQ (131 aa). In terms of domain architecture, VWFA spans 281–469; it reads EFVFLMDRSG…FALQCAVDNI (189 aa). Tyrosine 622 carries the phosphotyrosine modification.

In terms of biological role, may play a role in tumorigenesis as a tumor suppressor. Altered expression of this protein and disruption of the molecular pathway it is involved in may contribute directly to or modify tumorigenesis. The chain is von Willebrand factor A domain-containing protein 5A (Vwa5a) from Mus musculus (Mouse).